A 220-amino-acid polypeptide reads, in one-letter code: Small ribosomal subunit protein mS23 (220 aa).

It belongs to the mitochondrion-specific ribosomal protein mS23 family. Component of the mitochondrial small ribosomal subunit (mt-SSU). Mature yeast 74S mitochondrial ribosomes consist of a small (37S) and a large (54S) subunit. The 37S small subunit contains a 15S ribosomal RNA (15S mt-rRNA) and at least 32 different proteins. The 54S large subunit contains a 21S rRNA (21S mt-rRNA) and at least 45 different proteins.

The protein localises to the mitochondrion. Component of the mitochondrial ribosome (mitoribosome), a dedicated translation machinery responsible for the synthesis of mitochondrial genome-encoded proteins, including at least some of the essential transmembrane subunits of the mitochondrial respiratory chain. The mitoribosomes are attached to the mitochondrial inner membrane and translation products are cotranslationally integrated into the membrane. In Schizosaccharomyces pombe (strain 972 / ATCC 24843) (Fission yeast), this protein is Small ribosomal subunit protein mS23 (rsm25).